Consider the following 184-residue polypeptide: Peptidyl-tRNA hydrolase (184 aa).

Position 14 (Y14) interacts with tRNA. The Proton acceptor role is filled by H19. The tRNA site is built by F64, N66, and N112.

The protein belongs to the PTH family. Monomer.

Its subcellular location is the cytoplasm. It catalyses the reaction an N-acyl-L-alpha-aminoacyl-tRNA + H2O = an N-acyl-L-amino acid + a tRNA + H(+). Hydrolyzes ribosome-free peptidyl-tRNAs (with 1 or more amino acids incorporated), which drop off the ribosome during protein synthesis, or as a result of ribosome stalling. Its function is as follows. Catalyzes the release of premature peptidyl moieties from peptidyl-tRNA molecules trapped in stalled 50S ribosomal subunits, and thus maintains levels of free tRNAs and 50S ribosomes. This chain is Peptidyl-tRNA hydrolase, found in Thermoanaerobacter pseudethanolicus (strain ATCC 33223 / 39E) (Clostridium thermohydrosulfuricum).